The following is a 431-amino-acid chain: Glutamate-1-semialdehyde 2,1-aminomutase (431 aa).

Lysine 265 carries the N6-(pyridoxal phosphate)lysine modification.

It belongs to the class-III pyridoxal-phosphate-dependent aminotransferase family. HemL subfamily. In terms of assembly, homodimer. The cofactor is pyridoxal 5'-phosphate.

It is found in the cytoplasm. It carries out the reaction (S)-4-amino-5-oxopentanoate = 5-aminolevulinate. It functions in the pathway porphyrin-containing compound metabolism; protoporphyrin-IX biosynthesis; 5-aminolevulinate from L-glutamyl-tRNA(Glu): step 2/2. The chain is Glutamate-1-semialdehyde 2,1-aminomutase from Vibrio campbellii (strain ATCC BAA-1116).